The primary structure comprises 118 residues: Large ribosomal subunit protein uL24 (118 aa).

It belongs to the universal ribosomal protein uL24 family. As to quaternary structure, part of the 50S ribosomal subunit.

Functionally, one of two assembly initiator proteins, it binds directly to the 5'-end of the 23S rRNA, where it nucleates assembly of the 50S subunit. In terms of biological role, one of the proteins that surrounds the polypeptide exit tunnel on the outside of the subunit. The protein is Large ribosomal subunit protein uL24 of Prochlorococcus marinus (strain NATL1A).